A 415-amino-acid polypeptide reads, in one-letter code: MQVYAVGGAIRDELLGKPSQDRDYVVVGATPAEMEAAGYRPVGKDFPVFLHPRTQEEYALARTERKTAMGYKGFAFYCEPDVTLEDDLVRRDLTINAMARAVDADGNLTGPVIDPHGGQRDLAARLFRHVSDAFAEDPVRILRLARFAARFHDFNVAAETMRLMREMVAAGEVDALVPERVWQELARGLMEARPSRMFEVLRECGALARLLPELERLWGVPQRADFHPEVDTGVHVMMVIDCAAALGAPLPVRFAALVHDLGKGTTPEDVLPRHIGHELRSVRLLEEVCARLRVPNECRDLAVVVAREHGHIHRSLELGAAAVVRLLERCDALRKPARFAQALQACEADKRGRKGFEHSDYPQAARLLAAREAAASVDAGAIARACADNVAQIKDRVHAARVEAVAQRLGAQPGE.

Positions 8 and 11 each coordinate ATP. CTP is bound by residues Gly-8 and Arg-11. Mg(2+)-binding residues include Asp-21 and Asp-23. Residues Arg-91, Arg-143, and Arg-146 each contribute to the ATP site. Positions 91, 143, and 146 each coordinate CTP. In terms of domain architecture, HD spans 232–333 (TGVHVMMVID…VRLLERCDAL (102 aa)).

This sequence belongs to the tRNA nucleotidyltransferase/poly(A) polymerase family. Bacterial CCA-adding enzyme type 1 subfamily. As to quaternary structure, monomer. Can also form homodimers and oligomers. It depends on Mg(2+) as a cofactor. Requires Ni(2+) as cofactor.

The catalysed reaction is a tRNA precursor + 2 CTP + ATP = a tRNA with a 3' CCA end + 3 diphosphate. It catalyses the reaction a tRNA with a 3' CCA end + 2 CTP + ATP = a tRNA with a 3' CCACCA end + 3 diphosphate. Its function is as follows. Catalyzes the addition and repair of the essential 3'-terminal CCA sequence in tRNAs without using a nucleic acid template. Adds these three nucleotides in the order of C, C, and A to the tRNA nucleotide-73, using CTP and ATP as substrates and producing inorganic pyrophosphate. tRNA 3'-terminal CCA addition is required both for tRNA processing and repair. Also involved in tRNA surveillance by mediating tandem CCA addition to generate a CCACCA at the 3' terminus of unstable tRNAs. While stable tRNAs receive only 3'-terminal CCA, unstable tRNAs are marked with CCACCA and rapidly degraded. The polypeptide is Multifunctional CCA protein (Cupriavidus taiwanensis (strain DSM 17343 / BCRC 17206 / CCUG 44338 / CIP 107171 / LMG 19424 / R1) (Ralstonia taiwanensis (strain LMG 19424))).